The sequence spans 767 residues: Ribonucleoside-diphosphate reductase large subunit (767 aa).

Residues Thr176, 191-192, Gly222, 392-396, and 578-582 contribute to the substrate site; these read SC, NLCAE, and PTAGT. Cys192 and Cys408 are joined by a disulfide. The Proton acceptor role is filled by Asn392. The active-site Cysteine radical intermediate is Cys394. Glu396 functions as the Proton acceptor in the catalytic mechanism.

Belongs to the ribonucleoside diphosphate reductase large chain family. As to quaternary structure, heterotetramer composed of a homodimer of the large subunit (R1) and a homodimer of the small subunit (R2). Larger multisubunit protein complex are also active, composed of (R1)n(R2)n.

The enzyme catalyses a 2'-deoxyribonucleoside 5'-diphosphate + [thioredoxin]-disulfide + H2O = a ribonucleoside 5'-diphosphate + [thioredoxin]-dithiol. Ribonucleoside-diphosphate reductase holoenzyme provides the precursors necessary for viral DNA synthesis. Allows virus growth in non-dividing cells, as well as reactivation from latency in infected hosts. Catalyzes the biosynthesis of deoxyribonucleotides from the corresponding ribonucleotides. In Saimiri sciureus (Common squirrel monkey), this protein is Ribonucleoside-diphosphate reductase large subunit.